The following is a 419-amino-acid chain: Enolase (419 aa).

Glutamine 161 is a (2R)-2-phosphoglycerate binding site. The Proton donor role is filled by glutamate 205. Residues aspartate 240, glutamate 283, and aspartate 309 each coordinate Mg(2+). Lysine 334, arginine 363, serine 364, and lysine 385 together coordinate (2R)-2-phosphoglycerate. The active-site Proton acceptor is the lysine 334.

This sequence belongs to the enolase family. Mg(2+) serves as cofactor.

It localises to the cytoplasm. The protein resides in the secreted. The protein localises to the cell surface. The enzyme catalyses (2R)-2-phosphoglycerate = phosphoenolpyruvate + H2O. It functions in the pathway carbohydrate degradation; glycolysis; pyruvate from D-glyceraldehyde 3-phosphate: step 4/5. In terms of biological role, catalyzes the reversible conversion of 2-phosphoglycerate (2-PG) into phosphoenolpyruvate (PEP). It is essential for the degradation of carbohydrates via glycolysis. The polypeptide is Enolase (Saccharolobus islandicus (strain Y.G.57.14 / Yellowstone #1) (Sulfolobus islandicus)).